The following is a 365-amino-acid chain: uncharacterized protein (365 aa).

2 disordered regions span residues 218–262 and 315–342; these read QRPS…AEAA and PRLP…RTPC. 2 stretches are compositionally biased toward basic and acidic residues: residues 239-257 and 331-341; these read PDNR…KDPE and MEFRNLSDRTP.

This is an uncharacterized protein from Mus musculus (Mouse).